We begin with the raw amino-acid sequence, 241 residues long: Probable transcriptional regulatory protein stu0195 (241 aa).

The protein belongs to the TACO1 family. YeeN subfamily.

It is found in the cytoplasm. This Streptococcus thermophilus (strain ATCC BAA-250 / LMG 18311) protein is Probable transcriptional regulatory protein stu0195.